We begin with the raw amino-acid sequence, 146 residues long: Anti-sigma F factor (146 aa).

It belongs to the anti-sigma-factor family.

It catalyses the reaction L-seryl-[protein] + ATP = O-phospho-L-seryl-[protein] + ADP + H(+). It carries out the reaction L-threonyl-[protein] + ATP = O-phospho-L-threonyl-[protein] + ADP + H(+). In terms of biological role, binds to sigma F and blocks its ability to form an RNA polymerase holoenzyme (E-sigma F). Phosphorylates SpoIIAA on a serine residue. This phosphorylation may enable SpoIIAA to act as an anti-anti-sigma factor that counteracts SpoIIAB and thus releases sigma F from inhibition. The chain is Anti-sigma F factor from Shouchella clausii (strain KSM-K16) (Alkalihalobacillus clausii).